The primary structure comprises 125 residues: Large ribosomal subunit protein bL21 (125 aa).

Residues 75-89 are compositionally biased toward basic residues; it reads FKKRRRQNSKRKRGH. Disordered stretches follow at residues 75 to 94 and 103 to 125; these read FKKR…QDLT and AGGA…APEA. Positions 106–125 are enriched in low complexity; it reads ASPAAAAASSETPAASAPEA.

This sequence belongs to the bacterial ribosomal protein bL21 family. As to quaternary structure, part of the 50S ribosomal subunit. Contacts protein L20.

Functionally, this protein binds to 23S rRNA in the presence of protein L20. The chain is Large ribosomal subunit protein bL21 from Methylocella silvestris (strain DSM 15510 / CIP 108128 / LMG 27833 / NCIMB 13906 / BL2).